Consider the following 340-residue polypeptide: uncharacterized protein (340 aa).

Residues 6–26 form a helical membrane-spanning segment; it reads ITFGLLVLMVCVILFVLYVQL.

The protein resides in the cell membrane. This is an uncharacterized protein from Bacillus subtilis (strain 168).